The primary structure comprises 403 residues: Protein LAZ1 homolog 2 (403 aa).

Helical transmembrane passes span 16-36 (SLII…YSIL), 50-70 (WIVS…ISLS), 162-182 (MILK…GVYG), 191-211 (GYPY…FCLV), 236-256 (IVFA…YGIL), and 269-289 (FLIC…FPAE). The disordered stretch occupies residues 381–403 (SDGKEETEVTEEVTVETSVPPKE).

Belongs to the TMEM184 family.

It localises to the membrane. In Arabidopsis thaliana (Mouse-ear cress), this protein is Protein LAZ1 homolog 2.